The following is a 147-amino-acid chain: MDTLTAIGRWLAKQHVVTWCVHHEGELWCANAFYLFDAQNVALYLLTDDKTRHAQMSGACAPVAGTVNGQPKTVTRIRGVQFKGVIRRLEGQESDAARKAYLRRFPVARVLPAPVWEIRLDEIKFTDNTLGFGKKLHWLRDSRAQQA.

The protein belongs to the UPF0306 family.

This is UPF0306 protein YhbP from Salmonella schwarzengrund (strain CVM19633).